Here is a 393-residue protein sequence, read N- to C-terminus: G protein-activated inward rectifier potassium channel 3 (393 aa).

The interval 1–23 (MAQENAAFSPGQEEPPRRRGRQR) is disordered. The Cytoplasmic segment spans residues 1–57 (MAQENAAFSPGQEEPPRRRGRQRYVEKDGRCNVQQGNVRETYRYLTDLFTTLVDLQW). Residues 58–82 (RLSLLFFVLAYALTWLFFGAIWWLI) form a helical membrane-spanning segment. The Extracellular segment spans residues 83–106 (AYGRGDLEHLEDTAWTPCVNNLNG). Positions 107-118 (FVAAFLFSIETE) form an intramembrane region, helical; Pore-forming. Residues 119–125 (TTIGYGH) constitute an intramembrane region (pore-forming). A Selectivity filter motif is present at residues 120-125 (TIGYGH). Over 126-134 (RVITDQCPE) the chain is Extracellular. The helical transmembrane segment at 135-156 (GIVLLLLQAILGSMVNAFMVGC) threads the bilayer. Topologically, residues 157–393 (MFVKISQPNK…LPPPESESKV (237 aa)) are cytoplasmic. The disordered stretch occupies residues 360–393 (KVEEEGAGEGAGGEAGADKEQNGCLPPPESESKV). The span at 384 to 393 (LPPPESESKV) shows a compositional bias: pro residues. The PDZ-binding signature appears at 390–393 (ESKV).

Belongs to the inward rectifier-type potassium channel (TC 1.A.2.1) family. KCNJ9 subfamily. As to quaternary structure, associates with KCNJ3/GIRK1 to form a G-protein-activated heteromultimer pore-forming unit. Interacts (via PDZ-binding motif) with SNX27 (via PDZ domain); the interaction is required when endocytosed to prevent degradation in lysosomes and promote recycling to the plasma membrane.

The protein localises to the membrane. It catalyses the reaction K(+)(in) = K(+)(out). Functionally, inward rectifier potassium channels are characterized by a greater tendency to allow potassium to flow into the cell rather than out of it. Their voltage dependence is regulated by the concentration of extracellular potassium; as external potassium is raised, the voltage range of the channel opening shifts to more positive voltages. The inward rectification is mainly due to the blockage of outward current by internal magnesium, This receptor is controlled by G proteins. Unable to produce channel activity when expressed alone. Forms a functional channel in association with KCNJ3/GIRK1. The polypeptide is G protein-activated inward rectifier potassium channel 3 (KCNJ9) (Homo sapiens (Human)).